Consider the following 180-residue polypeptide: Protein C2-DOMAIN ABA-RELATED 10 (180 aa).

Positions 1 to 105 constitute a C2 domain; the sequence is MDQKPLGLLT…EALKMGMELL (105 aa). The Ca(2+) site is built by R22, D23, D28, D74, W75, D76, and D82.

It belongs to the plant CAR protein family. In terms of assembly, binds to PYR/PYL/RCAR abscisic acid intracellular receptors in an ABA-independent manner, both at the plasma membrane and in the nucleus.

It is found in the cell membrane. It localises to the nucleus. Stimulates the GTPase/ATPase activities of Obg-like ATPases. Mediates the transient calcium-dependent interaction of PYR/PYL/RCAR abscisic acid (ABA) receptors with the plasma membrane and thus regulates ABA sensitivity. This chain is Protein C2-DOMAIN ABA-RELATED 10, found in Arabidopsis thaliana (Mouse-ear cress).